A 631-amino-acid polypeptide reads, in one-letter code: ATP-dependent DNA helicase 2 subunit 1 (631 aa).

The Ku domain occupies 262–487; sequence FYLGPNLSMS…VEFFQKIIKK (226 aa). The segment at 550 to 570 is disordered; it reads AEPHKKRAAKSTTAGASGPKM.

The protein belongs to the ku70 family. In terms of assembly, heterodimer of a 70 kDa and a 80 kDa subunit.

It is found in the nucleus. The protein resides in the chromosome. The catalysed reaction is ATP + H2O = ADP + phosphate + H(+). Functionally, single-stranded DNA-dependent ATP-dependent helicase. Involved in non-homologous end joining (NHEJ) DNA double strand break repair. Sequence-specific DNA-binding protein that has a high affinity for a 31 bp sequence in the Yp1 gene. Site-specific DNA binding to 31 bp P element inverted repeats. The polypeptide is ATP-dependent DNA helicase 2 subunit 1 (Irbp) (Drosophila melanogaster (Fruit fly)).